Reading from the N-terminus, the 669-residue chain is MTAVAASSRVSDPLAASSSAHPRTLRSSPRKRTTSHDSSISPSAAQSKQLPRRKKPRTELVDESELDCAACPAVGQPAPTPGKGAASDRETWICCTHCKTWFHCICIGLENPDDFSKWYCQPCITRSEQTFESGTSSSHPPFANVVRPPRRKSERAKLQIDYAAIQEGIPADPLGRWKNLLNAYEFEPDQFRRMQGHEWTFDWLLHDESALKQPVLVPAPPDRSSQAPHVQAKAEDVAASPVPRPKPARAKKQATHRLVPCHTSIPGMVVPPPEMSIFDVADIIGHDTPVEVIDVASQSSSKASWTISEWAEYFNTPKEKKKKTLNVISLEVTGTPMQAYVEAPQLVRDLDWVTRDWPAERRDASCSENSWPKVQRYVLMGVEGAYSDWHIDFAGSSVYYHVIWGQKTFLFAPPTARNLAAYKAWCSSTRQDFDWLGDHLHSLTRVDIGPGETMLIPSGWLHCVYTPKNTLVVGGNFLTDWNVATQWKLVEIEEATKVPRKFRFPHLKRLSWFVAKGWNDRLEPLAEFETLTKEEDQVLEESAQVSAQVDVGSLTEVVPPLKVLNNIELVLQSLSDDLELIQDPYVAESGDERKVKQQKAAREAIPTHHVGNIQKAEAMLASLRQRVDRAKSLADAVQSERVCLTWEATRAKKAKAANGSAIKSRKARR.

The disordered stretch occupies residues 1 to 61; the sequence is MTAVAASSRV…RRKKPRTELV (61 aa). 2 stretches are compositionally biased toward polar residues: residues 16–27 and 36–49; these read ASSSAHPRTLRS and HDSS…QSKQ. Residues 65-126 form a PHD-type zinc finger; sequence ELDCAACPAV…KWYCQPCITR (62 aa). Disordered regions lie at residues 131–150 and 220–256; these read FESG…RPPR and PPDR…QATH. Residues 246–255 show a composition bias toward basic residues; it reads KPARAKKQAT. In terms of domain architecture, JmjC spans 332–494; the sequence is VTGTPMQAYV…TQWKLVEIEE (163 aa). Residues His-390 and Asp-392 each contribute to the Fe cation site. Position 407 (Lys-407) interacts with substrate. His-462 is a binding site for Fe cation.

This sequence belongs to the JHDM1 histone demethylase family. It depends on Fe(2+) as a cofactor.

The protein localises to the nucleus. It carries out the reaction N(6),N(6)-dimethyl-L-lysyl(36)-[histone H3] + 2 2-oxoglutarate + 2 O2 = L-lysyl(36)-[histone H3] + 2 formaldehyde + 2 succinate + 2 CO2. Functionally, histone demethylase that specifically demethylates 'Lys-36' of histone H3, thereby playing a central role in histone code. This is JmjC domain-containing histone demethylation protein 1 (JHD1) from Mycosarcoma maydis (Corn smut fungus).